A 247-amino-acid polypeptide reads, in one-letter code: Uridylate kinase (247 aa).

Residue K14 to G17 coordinates ATP. Residues G22 to G27 form an involved in allosteric activation by GTP region. Position 56 (G56) interacts with UMP. The ATP site is built by G57 and R61. Residues D76 and I137–T144 each bind UMP. ATP contacts are provided by N165, Y171, and D174.

This sequence belongs to the UMP kinase family. In terms of assembly, homohexamer.

It localises to the cytoplasm. It catalyses the reaction UMP + ATP = UDP + ADP. It participates in pyrimidine metabolism; CTP biosynthesis via de novo pathway; UDP from UMP (UMPK route): step 1/1. With respect to regulation, allosterically activated by GTP. Inhibited by UTP. Its function is as follows. Catalyzes the reversible phosphorylation of UMP to UDP. This chain is Uridylate kinase, found in Streptococcus pneumoniae (strain ATCC BAA-255 / R6).